The sequence spans 111 residues: WAP four-disulfide core domain protein 12 (111 aa).

The first 23 residues, 1-23, serve as a signal peptide directing secretion; that stretch reads MGSSSFLVLMVSLTLVTLVAAEG. One can recognise a WAP domain in the interval 27-74; the sequence is GIEKAGVCPADNVRCFKSDPPQCHTDQDCLGERKCCYLHCGFKCVIPV. 4 disulfides stabilise this stretch: C34–C62, C41–C66, C49–C61, and C55–C70. Positions 80-111 are disordered; the sequence is GGNKDEDVSGPCPEPGWEAKSPGSSSTGCPQK. Residues 101–111 show a composition bias toward polar residues; that stretch reads PGSSSTGCPQK.

The protein resides in the secreted. In terms of biological role, antibacterial protein. Putative acid-stable proteinase inhibitor. This Chlorocebus aethiops (Green monkey) protein is WAP four-disulfide core domain protein 12 (WFDC12).